The following is a 128-amino-acid chain: Glycine cleavage system H protein (128 aa).

Residues Thr-25–Lys-107 enclose the Lipoyl-binding domain. The residue at position 66 (Lys-66) is an N6-lipoyllysine.

It belongs to the GcvH family. In terms of assembly, the glycine cleavage system is composed of four proteins: P, T, L and H. (R)-lipoate serves as cofactor.

In terms of biological role, the glycine cleavage system catalyzes the degradation of glycine. The H protein shuttles the methylamine group of glycine from the P protein to the T protein. This is Glycine cleavage system H protein from Neisseria meningitidis serogroup C (strain 053442).